The sequence spans 724 residues: WW domain-containing protein ZK1098.1 (724 aa).

WW domains follow at residues 78-111 and 123-156; these read PSVESDWSVHTNEKGTPYYHNRVTKQTSWIKPDV and QPQQGQWKEFMSDDGKPYYYNTLTKKTQWVKPDG. FF domains lie at 224-282, 295-349, 353-422, 442-502, 507-562, and 578-632; these read KKRQ…WKVQ, IKKS…CIDF, RDKE…HIKQ, QRKV…FVED, YTED…LIEK, and KRRL…YKNG. The interval 626 to 724 is disordered; the sequence is FNHYKNGTSG…KRKRRESEAD (99 aa). The span at 630–639 shows a compositional bias: polar residues; that stretch reads KNGTSGTTAG. The segment covering 645–657 has biased composition (basic residues); it reads KKKKKKDKKKKNK. The segment covering 681–692 has biased composition (basic and acidic residues); sequence SKEDRMDDEERG. Basic residues predominate over residues 693-703; sequence KKSKKSRKRSP.

The protein is WW domain-containing protein ZK1098.1 of Caenorhabditis elegans.